Consider the following 363-residue polypeptide: 3-dehydroquinate synthase (363 aa).

NAD(+) contacts are provided by residues 107-111 (GVIGD), 131-132 (TT), lysine 144, and lysine 153. 3 residues coordinate Zn(2+): glutamate 186, histidine 251, and histidine 268.

The protein belongs to the sugar phosphate cyclases superfamily. Dehydroquinate synthase family. The cofactor is NAD(+). It depends on Co(2+) as a cofactor. Zn(2+) is required as a cofactor.

It localises to the cytoplasm. It catalyses the reaction 7-phospho-2-dehydro-3-deoxy-D-arabino-heptonate = 3-dehydroquinate + phosphate. It participates in metabolic intermediate biosynthesis; chorismate biosynthesis; chorismate from D-erythrose 4-phosphate and phosphoenolpyruvate: step 2/7. Its function is as follows. Catalyzes the conversion of 3-deoxy-D-arabino-heptulosonate 7-phosphate (DAHP) to dehydroquinate (DHQ). The chain is 3-dehydroquinate synthase from Nostoc sp. (strain PCC 7120 / SAG 25.82 / UTEX 2576).